We begin with the raw amino-acid sequence, 83 residues long: Small ribosomal subunit protein bS16 (83 aa).

It belongs to the bacterial ribosomal protein bS16 family.

The chain is Small ribosomal subunit protein bS16 from Pseudomonas fluorescens (strain Pf0-1).